Consider the following 251-residue polypeptide: LexA repressor (251 aa).

A DNA-binding region (H-T-H motif) is located at residues 26 to 46 (FDEMKDALGLKSKSGIHRLIK). Active-site for autocatalytic cleavage activity residues include Ser-172 and Lys-210.

It belongs to the peptidase S24 family. Homodimer.

It catalyses the reaction Hydrolysis of Ala-|-Gly bond in repressor LexA.. In terms of biological role, represses a number of genes involved in the response to DNA damage (SOS response), including recA and lexA. In the presence of single-stranded DNA, RecA interacts with LexA causing an autocatalytic cleavage which disrupts the DNA-binding part of LexA, leading to derepression of the SOS regulon and eventually DNA repair. The chain is LexA repressor from Rhodospirillum rubrum (strain ATCC 11170 / ATH 1.1.1 / DSM 467 / LMG 4362 / NCIMB 8255 / S1).